The following is a 179-amino-acid chain: Replication restart protein DnaT (179 aa).

Residues 151-179 (SRASNGGQPKRDVNSVSEPDSHIPRGFRG) are disordered. Basic and acidic residues predominate over residues 159–173 (PKRDVNSVSEPDSHI).

The protein belongs to the DnaT family. As to quaternary structure, homooligomerizes. Interacts with PriB. Component of the replication restart primosome. Primosome assembly occurs via a 'hand-off' mechanism. PriA binds to replication forks, subsequently PriB then DnaT bind; DnaT then displaces ssDNA to generate the helicase loading substrate.

Its function is as follows. Involved in the restart of stalled replication forks, which reloads the replicative helicase on sites other than the origin of replication. Can function in multiple replication restart pathways. Displaces ssDNA from a PriB-ssDNA complex. Probably forms a spiral filament on ssDNA. The chain is Replication restart protein DnaT from Klebsiella pneumoniae (strain 342).